The primary structure comprises 123 residues: Heat-labile enterotoxin IIA, B chain (123 aa).

The signal sequence occupies residues 1–19 (MSSKKIIGAFVLMTGILSG). The cysteines at positions 33 and 104 are disulfide-linked.

Heterohexamer of one A chain and of five B chains.

In terms of biological role, the biological activity of the toxin is produced by the A chain, which activates intracellular adenyl cyclase. In Escherichia coli, this protein is Heat-labile enterotoxin IIA, B chain.